Consider the following 761-residue polypeptide: Ribonucleoside-diphosphate reductase subunit alpha (761 aa).

One can recognise an ATP-cone domain in the interval Leu-5–Gly-95. ATP-binding positions include Lys-9, Glu-15–Lys-21, Thr-55, and Lys-91. Thr-209 serves as a coordination point for GDP. A disulfide bridge connects residues Cys-225 and Cys-462. DTTP is bound by residues Asp-232 to Leu-234, Arg-262, and Arg-269. Asn-437 provides a ligand contact to GDP. Asn-437 functions as the Proton acceptor in the catalytic mechanism. Cys-439 acts as the Cysteine radical intermediate in catalysis. Residues Glu-441 and Glu-623 to Ser-625 each bind GDP. Glu-441 functions as the Proton acceptor in the catalytic mechanism.

It belongs to the ribonucleoside diphosphate reductase large chain family. Tetramer of two alpha and two beta subunits.

It catalyses the reaction a 2'-deoxyribonucleoside 5'-diphosphate + [thioredoxin]-disulfide + H2O = a ribonucleoside 5'-diphosphate + [thioredoxin]-dithiol. With respect to regulation, under complex allosteric control mediated by deoxynucleoside triphosphates and ATP binding to separate specificity and activation sites on the alpha subunit. The type of nucleotide bound at the specificity site determines substrate preference. It seems probable that ATP makes the enzyme reduce CDP and UDP, dGTP favors ADP reduction and dTTP favors GDP reduction. Stimulated by ATP and inhibited by dATP binding to the activity site. Provides the precursors necessary for DNA synthesis. Catalyzes the biosynthesis of deoxyribonucleotides from the corresponding ribonucleotides. The chain is Ribonucleoside-diphosphate reductase subunit alpha (nrdA) from Buchnera aphidicola subsp. Baizongia pistaciae (strain Bp).